Reading from the N-terminus, the 136-residue chain is 1,4-dihydroxy-2-naphthoyl-CoA hydrolase (136 aa).

Catalysis depends on Glu-63, which acts as the Nucleophile or proton acceptor. Residues Gly-82, 89–92 (HVRS), and 106–111 (HLGSRH) each bind substrate.

The protein belongs to the thioesterase PaaI family. As to quaternary structure, homotetramer. Dimer of dimers.

It carries out the reaction 1,4-dihydroxy-2-naphthoyl-CoA + H2O = 1,4-dihydroxy-2-naphthoate + CoA + H(+). Its pathway is quinol/quinone metabolism; 1,4-dihydroxy-2-naphthoate biosynthesis; 1,4-dihydroxy-2-naphthoate from chorismate: step 7/7. It participates in quinol/quinone metabolism; menaquinone biosynthesis. In terms of biological role, catalyzes the hydrolysis of 1,4-dihydroxy-2-naphthoyl-CoA (DHNA-CoA) to 1,4-dihydroxy-2-naphthoate (DHNA). Also shows significant activity toward a wide range of acyl-CoA thioesters, and minimal activity toward benzoyl-holoEntB. This is 1,4-dihydroxy-2-naphthoyl-CoA hydrolase from Escherichia coli (strain K12).